We begin with the raw amino-acid sequence, 192 residues long: Urease accessory protein UreE (192 aa).

A disordered region spans residues 170–192 (EHHGHSHSHSHDHVHDEKCGHKH). Positions 178–192 (HSHDHVHDEKCGHKH) are enriched in basic and acidic residues.

The protein belongs to the UreE family.

It localises to the cytoplasm. Its function is as follows. Involved in urease metallocenter assembly. Binds nickel. Probably functions as a nickel donor during metallocenter assembly. This is Urease accessory protein UreE from Cupriavidus necator (strain ATCC 17699 / DSM 428 / KCTC 22496 / NCIMB 10442 / H16 / Stanier 337) (Ralstonia eutropha).